The following is an 802-amino-acid chain: Chromosome alignment-maintaining phosphoprotein 1 (802 aa).

The residue at position 1 (Met1) is an N-acetylmethionine. A compositionally biased stretch (basic and acidic residues) spans 88 to 105 (SDKWSEQPKEQPSKDTES). The tract at residues 88 to 475 (SDKWSEQPKE…PDLWKSSFIM (388 aa)) is disordered. The residue at position 108 (Ser108) is a Phosphoserine. The segment covering 135–148 (QKTSPSLCPESQAS) has biased composition (polar residues). The segment covering 185-203 (ERVDPPCELPELEKPERGP) has biased composition (basic and acidic residues). 15 positions are modified to phosphoserine: Ser204, Ser207, Ser234, Ser237, Ser243, Ser252, Ser254, Ser265, Ser272, Ser276, Ser298, Ser309, Ser334, Ser345, and Ser365. The interval 261–479 (ARTASPEPRK…KSSFIMESQK (219 aa)) is mediates interaction with MAD2L2. Residues 332-351 (PMSPGPWKPIPSVSPGPWKP) show a composition bias toward pro residues. The span at 354–368 (SMSTASWKSSVSSGS) shows a compositional bias: low complexity. Polar residues predominate over residues 369 to 378 (WKTPPTSPES). A Phosphothreonine modification is found at Thr371. Phosphoserine is present on residues Ser375, Ser394, Ser405, Ser416, Ser421, Ser425, Ser432, Ser434, and Ser441. The interval 440–580 (VSPDQRKTSP…EIQLEAVDNA (141 aa)) is mediates localization to the spindle and the kinetochore and is required for the attachment of spindle microtubules to the kinetochore. Thr447 bears the Phosphothreonine mark. Residues Ser448, Ser451, and Ser461 each carry the phosphoserine modification. N6-acetyllysine; alternate is present on Lys479. A Glycyl lysine isopeptide (Lys-Gly) (interchain with G-Cter in SUMO2); alternate cross-link involves residue Lys479. Phosphoserine occurs at positions 497, 502, and 532. Lys555 participates in a covalent cross-link: Glycyl lysine isopeptide (Lys-Gly) (interchain with G-Cter in SUMO2). Positions 581 to 802 (KCDSLAQEGL…LESPLEEQQI (222 aa)) are mediates localization to the chromosome and the spindle and negatively regulates chromosome alignment. Thr593 is subject to Phosphothreonine. A Glycyl lysine isopeptide (Lys-Gly) (interchain with G-Cter in SUMO2) cross-link involves residue Lys596. Phosphoserine is present on residues Ser603, Ser605, Ser617, Ser622, Ser641, Ser642, and Ser643. The segment at 603–625 (SPSSKKLKKDSQENSDAELSSSE) is disordered. Lys660 participates in a covalent cross-link: Glycyl lysine isopeptide (Lys-Gly) (interchain with G-Cter in SUMO2). Ser665 bears the Phosphoserine mark. Lys679 is covalently cross-linked (Glycyl lysine isopeptide (Lys-Gly) (interchain with G-Cter in SUMO2)). At Ser726 the chain carries Phosphoserine. The C2H2-type zinc-finger motif lies at 728–750 (YKCTICGKAFLLESLLKNHVAAH).

In terms of assembly, interacts with MAD2L2. Interacts with POGZ, CBX1, CBX3 and CBX5. Phosphorylated by CDK1. Mitotic phosphorylation is required for the attachment of spindle microtubules to the kinetochore.

Its subcellular location is the nucleus. The protein resides in the chromosome. The protein localises to the centromere. It is found in the kinetochore. It localises to the cytoplasm. Its subcellular location is the cytoskeleton. The protein resides in the spindle. In terms of biological role, required for proper alignment of chromosomes at metaphase and their accurate segregation during mitosis. Involved in the maintenance of spindle microtubules attachment to the kinetochore during sister chromatid biorientation. May recruit CENPE and CENPF to the kinetochore. The polypeptide is Chromosome alignment-maintaining phosphoprotein 1 (Champ1) (Mus musculus (Mouse)).